Consider the following 224-residue polypeptide: MNLKNKKAICIMSGGMDSTLGAYMVKEMGYEIVALHFNYAQRTEAKELFCFKKICEALNVSNSYVLDLDFFSKIGASALTDKSIDIPINGLEEGVPITYVPFRNGIFLSIAAALAEKEEAVLIAIGVVQEDSSGYPDCKDSFITSMEQSINLGTKDETKIKIYMPLVHLSKSQIVEHALRLNVPLELTWSCYKDEEAACGVCDSCRLRLNGFRLANAKDPIEYM.

ATP is bound at residue 12–22; that stretch reads MSGGMDSTLGA. Residues Cys-191, Cys-199, Cys-202, and Cys-205 each contribute to the Zn(2+) site.

This sequence belongs to the QueC family. Zn(2+) is required as a cofactor.

It catalyses the reaction 7-carboxy-7-deazaguanine + NH4(+) + ATP = 7-cyano-7-deazaguanine + ADP + phosphate + H2O + H(+). It participates in purine metabolism; 7-cyano-7-deazaguanine biosynthesis. Its function is as follows. Catalyzes the ATP-dependent conversion of 7-carboxy-7-deazaguanine (CDG) to 7-cyano-7-deazaguanine (preQ(0)). This chain is 7-cyano-7-deazaguanine synthase, found in Sulfurimonas denitrificans (strain ATCC 33889 / DSM 1251) (Thiomicrospira denitrificans (strain ATCC 33889 / DSM 1251)).